The sequence spans 97 residues: Small ribosomal subunit protein bS20 (97 aa).

Positions 76 to 85 are enriched in basic residues; it reads RNNGARKKAG. The segment at 76 to 97 is disordered; sequence RNNGARKKAGLAKALQKVSQAS. A compositionally biased stretch (low complexity) spans 86–97; that stretch reads LAKALQKVSQAS.

The protein belongs to the bacterial ribosomal protein bS20 family.

Its function is as follows. Binds directly to 16S ribosomal RNA. This chain is Small ribosomal subunit protein bS20, found in Microcystis aeruginosa (strain NIES-843 / IAM M-2473).